A 487-amino-acid polypeptide reads, in one-letter code: GTPase Der (487 aa).

2 EngA-type G domains span residues 3–167 and 203–378; these read FTLA…EGFA and LQIA…DIWN. GTP is bound by residues 9-16, 56-60, 119-122, 209-216, 256-260, and 321-324; these read GRPNVGKS, DTAGL, NKAE, GRPNAGKS, DTAGM, and NKWD. Residues 379–463 enclose the KH-like domain; it reads RRITTARLNS…PIRLTMRGQG (85 aa). Residues 459–487 are disordered; the sequence is MRGQGDKNPFKERKFRTPSRLRKHLGKKG. A compositionally biased stretch (basic residues) spans 471–487; sequence RKFRTPSRLRKHLGKKG.

It belongs to the TRAFAC class TrmE-Era-EngA-EngB-Septin-like GTPase superfamily. EngA (Der) GTPase family. Associates with the 50S ribosomal subunit.

In terms of biological role, GTPase that plays an essential role in the late steps of ribosome biogenesis. The polypeptide is GTPase Der (Cereibacter sphaeroides (strain ATCC 17025 / ATH 2.4.3) (Rhodobacter sphaeroides)).